Reading from the N-terminus, the 322-residue chain is Ribosome biogenesis protein RLP7 (322 aa).

Over residues 1 to 16 (MSSTQDSKAQTLNSNP) the composition is skewed to polar residues. The tract at residues 1–52 (MSSTQDSKAQTLNSNPEILLRKRRNADRTRIERQELAKKKREEQIKKKRSNK) is disordered. S2 carries the post-translational modification N-acetylserine. The residue at position 14 (S14) is a Phosphoserine. A compositionally biased stretch (basic and acidic residues) spans 26-45 (ADRTRIERQELAKKKREEQI). T120 carries the post-translational modification Phosphothreonine. Position 278 is a phosphoserine (S278).

The protein belongs to the universal ribosomal protein uL30 family.

It is found in the nucleus. The protein localises to the nucleolus. In terms of biological role, involved in the biogenesis of the 60S ribosomal subunit. May act as a specificity factor that binds precursor rRNAs and tethers the enzymes that carry out the early 5' to 3' exonucleolytic reactions that generate the mature rRNAs. The protein is Ribosome biogenesis protein RLP7 (RLP7) of Saccharomyces cerevisiae (strain ATCC 204508 / S288c) (Baker's yeast).